The chain runs to 356 residues: Mannonate dehydratase 2 (356 aa).

It belongs to the mannonate dehydratase family. Requires Fe(2+) as cofactor. It depends on Mn(2+) as a cofactor.

The catalysed reaction is D-mannonate = 2-dehydro-3-deoxy-D-gluconate + H2O. It functions in the pathway carbohydrate metabolism; pentose and glucuronate interconversion. In terms of biological role, catalyzes the dehydration of D-mannonate. This Bacillus licheniformis (strain ATCC 14580 / DSM 13 / JCM 2505 / CCUG 7422 / NBRC 12200 / NCIMB 9375 / NCTC 10341 / NRRL NRS-1264 / Gibson 46) protein is Mannonate dehydratase 2.